Reading from the N-terminus, the 563-residue chain is Beta-catenin-like protein 1 (563 aa).

Position 1 is an N-acetylmethionine (M1). The interval 1–81 (MDVGELLSYQ…EEEEPLDESS (81 aa)) is disordered. A Nuclear localization signal motif is present at residues 16–33 (KRPRDDEEEELKTRRKQT). The segment covering 34 to 45 (GPRERGRYREEE) has biased composition (basic and acidic residues). A compositionally biased stretch (acidic residues) spans 66 to 78 (DGEEEEEEEEPLD). HEAT repeat units lie at residues 79-129 (ESSV…VVAT) and 134-176 (YHLL…TLHE). K91 is subject to N6-acetyllysine. The Nuclear export signal (NES) signature appears at 130–140 (MPDLYHLLVEL). 5 ARM repeats span residues 178–228 (EEGA…MAEF), 229–273 (RPEM…LQDN), 274–323 (DENR…CLML), 325–363 (SNRERFLKGEGLQLMNLMLREKKVSRSSALKVLDHAMIG), and 364–417 (PEGT…LLRN). S389 is modified (phosphoserine). Positions 476 to 540 (DMEDEFYLRR…HIIKEYAENI (65 aa)) form a coiled coil. Residue S545 is modified to Phosphoserine.

As to quaternary structure, component of the PRP19-CDC5L splicing complex composed of a core complex comprising a homotetramer of PRPF19, CDC5L, PLRG1 and BCAS2, and at least three less stably associated proteins CTNNBL1, CWC15 and HSPA8. Interacts directly with CWC15 and CDC5L in the complex. Interacts with AICDA; the interaction is important for the antibody diversification activity of AICDA. Interacts with PRPF31 (via its NLS). Interacts (via its N-terminal NLS) with KPNA1 and KPNA2.

It localises to the nucleus. Component of the PRP19-CDC5L complex that forms an integral part of the spliceosome and is required for activating pre-mRNA splicing. Participates in AID/AICDA-mediated somatic hypermutation (SHM) and class-switch recombination (CSR), 2 processes resulting in the production of high-affinity, mutated isotype-switched antibodies. This Mus musculus (Mouse) protein is Beta-catenin-like protein 1 (Ctnnbl1).